Here is a 357-residue protein sequence, read N- to C-terminus: Glycerol-3-phosphate dehydrogenase [NAD(P)+] (357 aa).

NADPH-binding residues include Ser30, Phe31, Arg51, and Lys124. The sn-glycerol 3-phosphate site is built by Lys124 and Gly152. Ala156 is an NADPH binding site. Lys207, Asp260, Ser270, Arg271, and Asn272 together coordinate sn-glycerol 3-phosphate. Residue Lys207 is the Proton acceptor of the active site. Residue Arg271 participates in NADPH binding. Glu297 contacts NADPH.

Belongs to the NAD-dependent glycerol-3-phosphate dehydrogenase family.

The protein resides in the cytoplasm. The catalysed reaction is sn-glycerol 3-phosphate + NAD(+) = dihydroxyacetone phosphate + NADH + H(+). It catalyses the reaction sn-glycerol 3-phosphate + NADP(+) = dihydroxyacetone phosphate + NADPH + H(+). The protein operates within membrane lipid metabolism; glycerophospholipid metabolism. In terms of biological role, catalyzes the reduction of the glycolytic intermediate dihydroxyacetone phosphate (DHAP) to sn-glycerol 3-phosphate (G3P), the key precursor for phospholipid synthesis. The polypeptide is Glycerol-3-phosphate dehydrogenase [NAD(P)+] (Acinetobacter baylyi (strain ATCC 33305 / BD413 / ADP1)).